The primary structure comprises 316 residues: MAVYTELAAETLEAFLGTYDIGTLVSFHGIAEGVENSNFLLRTTEGDFILTLFERRVNARELPWFLGLMQYLAGRGLNCPLPVSDRSGTALRSLADRPAAITTFLPGVSATQLDANLCLELGKVLARLHIAGEGYDAVRPNALSPAAWGPLLDSCGESGDELSPGLTAEVRKALQNVEAAWPATADLPRGQIHADLFPDNVFFQNGQVSGLIDFYFACTDFLAYDLAICLNAWCFRDEKTFEPSFAAAIMQGYESVRPLSDAEKAALPTLCQGAAIRFLLTRLYDWINTPADALVTRKDPLAYLRRLRHFQSASHV.

Belongs to the pseudomonas-type ThrB family.

It catalyses the reaction L-homoserine + ATP = O-phospho-L-homoserine + ADP + H(+). The protein operates within amino-acid biosynthesis; L-threonine biosynthesis; L-threonine from L-aspartate: step 4/5. The protein is Homoserine kinase of Gluconobacter oxydans (strain 621H) (Gluconobacter suboxydans).